The following is a 1454-amino-acid chain: ABC transporter G family member 39 (1454 aa).

In terms of domain architecture, ABC transporter 1 spans 175-448 (LGFFHLLPSK…FEYFGFQCPE (274 aa)). Residue 208–215 (GPPSSGKT) coordinates ATP. The ABC transmembrane type-2 1 domain occupies 526-739 (ELFKACFDRE…GQTAIVMNEF (214 aa)). Helical transmembrane passes span 544-564 (FVYV…MTVY), 584-604 (MFFS…FTVM), 623-643 (FALP…GIWI), 663-683 (LLAY…LGAI), 689-709 (ISNS…GFII), 716-736 (PWMT…AIVM), and 775-795 (FWIC…FYIL). The segment covering 812–824 (EEGKDKQKGENRG) has biased composition (basic and acidic residues). The tract at residues 812 to 838 (EEGKDKQKGENRGTEGSVVELNSSSNK) is disordered. Positions 853 to 1106 (LAFNNVNYYV…LVEYFEAVEG (254 aa)) constitute an ABC transporter 2 domain. Residue 898-905 (GVSGAGKT) coordinates ATP. The 215-residue stretch at 1178–1392 (TQTKACFWKQ…TLYGLITSQV (215 aa)) folds into the ABC transmembrane type-2 2 domain. Helical transmembrane passes span 1199-1219 (AIRF…FWQI), 1231-1251 (NFFG…AATV), 1285-1303 (IMYN…YSMI), 1312-1332 (FLWF…YGMM), 1342-1362 (IAGI…GFLI), 1367-1387 (IPIW…LYGL), and 1423-1443 (FLPV…FVFA).

It belongs to the ABC transporter superfamily. ABCG family. PDR (TC 3.A.1.205) subfamily.

Its subcellular location is the membrane. Functionally, may be a general defense protein. In Arabidopsis thaliana (Mouse-ear cress), this protein is ABC transporter G family member 39 (ABCG39).